The sequence spans 238 residues: MARACLQAVKYLMFAFNLLFWLGGCGVLGVGIWLAATQGSFATLSSSFPSLSAANLLIITGAFVMAIGFVGCLGAIKENKCLLLTFFLLLLLVFLLEATIAILFFAYTDKIDRYAQRDLKKGLHLYGTQGNVGLTNAWTIIQTDFRCCGVSNYTDWFEVYNATRVPDSCCLEFSESCGLHAPGTWWKAPCYETVKVWLQENLLAVGIFGLCTALVQILGLTFAMTMYCQVVKADTYCA.

The Cytoplasmic segment spans residues 1–13 (MARACLQAVKYLM). The helical transmembrane segment at 14–34 (FAFNLLFWLGGCGVLGVGIWL) threads the bilayer. Residues 35 to 55 (AATQGSFATLSSSFPSLSAAN) lie on the Extracellular side of the membrane. Residues 56-76 (LLIITGAFVMAIGFVGCLGAI) form a helical membrane-spanning segment. At 77 to 85 (KENKCLLLT) the chain is on the cytoplasmic side. A helical transmembrane segment spans residues 86-106 (FFLLLLLVFLLEATIAILFFA). The Extracellular segment spans residues 107-201 (YTDKIDRYAQ…ETVKVWLQEN (95 aa)). N-linked (GlcNAc...) asparagine glycosylation is found at N152 and N161. A helical membrane pass occupies residues 202–222 (LLAVGIFGLCTALVQILGLTF). Residues 223 to 238 (AMTMYCQVVKADTYCA) lie on the Cytoplasmic side of the membrane.

The protein belongs to the tetraspanin (TM4SF) family. Forms a complex with integrins.

The protein localises to the membrane. In Pongo abelii (Sumatran orangutan), this protein is Tetraspanin-4 (TSPAN4).